Here is a 132-residue protein sequence, read N- to C-terminus: Pre-histone-like nucleoprotein (132 aa).

Positions 2-23 are excised as a propeptide; the sequence is AILISPSNNTGWGLGTHKLFGG. A Nuclear localization signal motif is present at residues 124-132; sequence RRKRRVRSK.

The protein belongs to the adenoviridae histone-like nucleoprotein family. As to quaternary structure, interacts with the core-capsid bridging protein; this interaction bridges the virus core to the capsid. Interacts with host NPM1; this interaction might play a role in placing the pre-histone-like nucleoprotein on the viral DNA or regulating viral gene expression. Interacts with host HMGB1; this interaction inhibits host immune response. Cleaved near the N-terminus by the viral protease during virion maturation to form the mature protein.

The protein localises to the virion. Its subcellular location is the host nucleus. It localises to the host nucleolus. Functionally, plays a role in the inhibition of host immune response within the nucleus. Interacts with cellular nucleosomes and immobilizes the host immune danger signal HMGB1 on chromatin. In turn, prevents HMGB1 release out of the cell and thus decreases inflammation. Also plays a role in the wrapping and condensation of the viral DNA. May also promote viral genome import into the nucleus. In Canine adenovirus serotype 1 (strain CLL) (CAdV-1), this protein is Pre-histone-like nucleoprotein.